The sequence spans 216 residues: Snake venom metalloproteinase HT-1 (216 aa).

The Disintegrin domain occupies 8-94; sequence PPVCGNELLE…DCPMDDFHRN (87 aa). 6 residues coordinate Ca(2+): Val10, Asn13, Leu15, Glu17, Glu20, and Asp23. 14 cysteine pairs are disulfide-bonded: Cys11–Cys40, Cys22–Cys35, Cys24–Cys30, Cys34–Cys57, Cys48–Cys54, Cys53–Cys79, Cys66–Cys86, Cys73–Cys105, Cys98–Cys110, Cys117–Cys167, Cys132–Cys178, Cys145–Cys155, Cys162–Cys204, and Cys198–Cys209. Residues 72–74 carry the D/ECD-tripeptide motif; it reads ECD. Asn175 is a glycosylation site (N-linked (GlcNAc...) asparagine).

The protein belongs to the venom metalloproteinase (M12B) family. P-III subfamily. P-IIIa sub-subfamily. As to quaternary structure, monomer. Zn(2+) is required as a cofactor. As to expression, expressed by the venom gland.

The protein resides in the secreted. In terms of biological role, zinc protease from snake venom that induces hemorrhage. This Crotalus ruber ruber (Red diamond rattlesnake) protein is Snake venom metalloproteinase HT-1.